A 111-amino-acid polypeptide reads, in one-letter code: MNAQALVLTDNAANKVRQLRDSEGNDDLMLRVYVTGGGCSGFSYGFNFAESINEDDAEFVNGDVKMLVDSLSYQYLVGSVVDYVEGLEGSRFIVQNPNATTTCGCGSSFSI.

Residues C39, C103, and C105 each coordinate iron-sulfur cluster.

It belongs to the HesB/IscA family. In terms of assembly, homodimer. Iron-sulfur cluster is required as a cofactor.

Functionally, required for insertion of 4Fe-4S clusters for at least IspG. The sequence is that of Iron-sulfur cluster insertion protein ErpA from Acinetobacter baumannii (strain SDF).